Consider the following 511-residue polypeptide: Cytochrome P450 26B1 (511 aa).

Cys-440 is a binding site for heme.

The protein belongs to the cytochrome P450 family. Heme is required as a cofactor.

It is found in the endoplasmic reticulum membrane. It localises to the microsome membrane. It carries out the reaction all-trans-retinoate + reduced [NADPH--hemoprotein reductase] + O2 = all-trans-4-hydroxyretinoate + oxidized [NADPH--hemoprotein reductase] + H2O + H(+). It catalyses the reaction all-trans-retinoate + reduced [NADPH--hemoprotein reductase] + O2 = all-trans-18-hydroxyretinoate + oxidized [NADPH--hemoprotein reductase] + H2O + H(+). A cytochrome P450 monooxygenase involved in the metabolism of retinoates (RAs), the active metabolites of vitamin A, and critical signaling molecules in animals. RAs exist as at least four different isomers: all-trans-RA (atRA), 9-cis-RA, 13-cis-RA, and 9,13-dicis-RA, where atRA is considered to be the biologically active isomer, although 9-cis-RA and 13-cis-RA also have activity. Catalyzes the hydroxylation of atRA primarily at C-4 and C-18, thereby contributing to the regulation of atRA homeostasis and signaling. Hydroxylation of atRA limits its biological activity and initiates a degradative process leading to its eventual elimination. Involved in the convertion of atRA to all-trans-4-oxo-RA. Can oxidize all-trans-13,14-dihydroretinoate (DRA) to metabolites which could include all-trans-4-oxo-DRA, all-trans-4-hydroxy-DRA, all-trans-5,8-epoxy-DRA, and all-trans-18-hydroxy-DRA. Plays a role in skeletal development, both at the level of patterning and in the ossification of bone and the establishment of some synovial joints. This is Cytochrome P450 26B1 from Danio rerio (Zebrafish).